A 359-amino-acid chain; its full sequence is tRNA N6-adenosine threonylcarbamoyltransferase (359 aa).

Residues His115 and His119 each coordinate Fe cation. Substrate is bound by residues Leu137–Gly141, Asp170, Gly183, and Asn283. A Fe cation-binding site is contributed by Asp311. The disordered stretch occupies residues Ala328–Ala359.

It belongs to the KAE1 / TsaD family. It depends on Fe(2+) as a cofactor.

It is found in the cytoplasm. The enzyme catalyses L-threonylcarbamoyladenylate + adenosine(37) in tRNA = N(6)-L-threonylcarbamoyladenosine(37) in tRNA + AMP + H(+). Functionally, required for the formation of a threonylcarbamoyl group on adenosine at position 37 (t(6)A37) in tRNAs that read codons beginning with adenine. Is involved in the transfer of the threonylcarbamoyl moiety of threonylcarbamoyl-AMP (TC-AMP) to the N6 group of A37, together with TsaE and TsaB. TsaD likely plays a direct catalytic role in this reaction. The sequence is that of tRNA N6-adenosine threonylcarbamoyltransferase from Brucella abortus (strain S19).